We begin with the raw amino-acid sequence, 557 residues long: Membrane protein insertase YidC (557 aa).

The helical transmembrane segment at 1 to 21 (MNWLRNSLIAAILVITYVLFI) threads the bilayer. Residues 52 to 71 (SDDAVASSATEESDVPEVSV) form a disordered region. The next 5 helical transmembrane spans lie at 346–366 (TIDYSFLWFIAKPLFFALDFI), 369–389 (LVGNWGVAIILLTVLIKAVFF), 439–459 (FGGCLPILLQMPVFISLYWMI), 470–490 (FFLWIQDLSVKDPLFILPLLM), and 517–537 (PIGFTFLFMFFPAGLVLYWVV).

The protein belongs to the OXA1/ALB3/YidC family. Type 1 subfamily. In terms of assembly, interacts with the Sec translocase complex via SecD. Specifically interacts with transmembrane segments of nascent integral membrane proteins during membrane integration.

It localises to the cell inner membrane. Required for the insertion and/or proper folding and/or complex formation of integral membrane proteins into the membrane. Involved in integration of membrane proteins that insert both dependently and independently of the Sec translocase complex, as well as at least some lipoproteins. Aids folding of multispanning membrane proteins. This chain is Membrane protein insertase YidC, found in Saccharophagus degradans (strain 2-40 / ATCC 43961 / DSM 17024).